Consider the following 190-residue polypeptide: Somatotropin (190 aa).

Positions 1 to 17 are cleaved as a signal peptide; the sequence is MNRVILLLSVMCVGVSS. Cystine bridges form between cysteine 69-cysteine 163 and cysteine 180-cysteine 188.

The protein belongs to the somatotropin/prolactin family.

It is found in the secreted. Growth hormone plays an important role in growth control and is involved in the regulation of several anabolic processes. Implicated as an osmoregulatory substance important for seawater adaptation. The sequence is that of Somatotropin (gh) from Paralichthys olivaceus (Bastard halibut).